Here is a 456-residue protein sequence, read N- to C-terminus: MSSMASVLFAALAISGVQVTPSRGYGCFPQYSQFWGQYSPYFSLEGRSAISSAVPPGCKITFAQSLQRHGARFPTADKSATYSSLIKRIQEDATEFKDEFAFLKDYKYNLGADDLTPFGESQLYDSGINFFQRYHGLTKDSKVFVRSAGSERVVASAHKFVEGFNKAKGSEKGGATKLDLIISEEDRRKNPIAPQGCDAFDNDETADKITDQFRSTFTQPIVDRVNKKLPGANIKIGDIKSLMAMCPFDTVARTPDASKLSPFCHLFSHEEFRHYDYLETLGKFYGHGPGNSFGPAPGIGYVNELIARLTSSPVKDNTTVDHELDDNPKTFPLGLPLYADFSHDNSMTVIFTAMGLFNATKPLSPTKITDPADASGYSASWTVPFGARAYFEKMVCDHSPSAKQEYVRVLLNDRVFPLQDCHTDFLGRCKLDDFINGLTYARSNGNWDQCEVSPPK.

The first 24 residues, 1–24, serve as a signal peptide directing secretion; it reads MSSMASVLFAALAISGVQVTPSRG. Residues Gln37, Tyr38, Arg68, His69, Arg72, Thr75, and Arg152 each coordinate 1D-myo-inositol hexakisphosphate. Intrachain disulfides connect Cys58–Cys396, Cys197–Cys450, Cys246–Cys264, and Cys421–Cys429. Residue His69 is the Nucleophile of the active site. Lys283 contributes to the 1D-myo-inositol hexakisphosphate binding site. Asn317 carries N-linked (GlcNAc...) asparagine glycosylation. 1D-myo-inositol hexakisphosphate-binding residues include His343 and Asp344. The N-linked (GlcNAc...) asparagine glycan is linked to Asn358.

Belongs to the histidine acid phosphatase family. As to quaternary structure, monomer.

The protein localises to the secreted. The catalysed reaction is 1D-myo-inositol hexakisphosphate + H2O = 1D-myo-inositol 1,2,4,5,6-pentakisphosphate + phosphate. The enzyme catalyses 1D-myo-inositol 1,2,4,5,6-pentakisphosphate + H2O = 1D-myo-inositol 1,2,5,6-tetrakisphosphate + phosphate. It carries out the reaction 1D-myo-inositol 1,2,5,6-tetrakisphosphate + H2O = 1D-myo-inositol 1,2,6-trisphosphate + phosphate. It catalyses the reaction 1D-myo-inositol 1,2,6-trisphosphate + H2O = 1D-myo-inositol 1,2-bisphosphate + phosphate. The catalysed reaction is 1D-myo-inositol 1,2-bisphosphate + H2O = 1D-myo-inositol 2-phosphate + phosphate. Functionally, catalyzes the phosphate monoester hydrolysis of phytic acid (myo-inositol hexakisphosphate), which results in the stepwise formation of myo-inositol pentakis-, tetrakis-, tris-, bis-, and monophosphates, as well as the liberation of inorganic phosphate. Myo-inositol 2-monophosphate is the end product. The protein is Phytase A of Arthroderma benhamiae (strain ATCC MYA-4681 / CBS 112371) (Trichophyton mentagrophytes).